Consider the following 213-residue polypeptide: Thiopurine S-methyltransferase (213 aa).

The S-adenosyl-L-methionine site is built by W10, L45, E66, and R121.

This sequence belongs to the class I-like SAM-binding methyltransferase superfamily. TPMT family.

It localises to the cytoplasm. It carries out the reaction S-adenosyl-L-methionine + a thiopurine = S-adenosyl-L-homocysteine + a thiopurine S-methylether.. This chain is Thiopurine S-methyltransferase, found in Aliivibrio fischeri (strain ATCC 700601 / ES114) (Vibrio fischeri).